A 79-amino-acid polypeptide reads, in one-letter code: Small ribosomal subunit protein bS18 (79 aa).

This sequence belongs to the bacterial ribosomal protein bS18 family. As to quaternary structure, part of the 30S ribosomal subunit. Forms a tight heterodimer with protein bS6.

In terms of biological role, binds as a heterodimer with protein bS6 to the central domain of the 16S rRNA, where it helps stabilize the platform of the 30S subunit. This Streptococcus pneumoniae (strain Hungary19A-6) protein is Small ribosomal subunit protein bS18.